A 454-amino-acid chain; its full sequence is Exodeoxyribonuclease 7 large subunit (454 aa).

Residues 337–352 (ANQRQQRASQRLRQQN) show a composition bias toward low complexity. The interval 337 to 359 (ANQRQQRASQRLRQQNPQPRIHR) is disordered.

The protein belongs to the XseA family. As to quaternary structure, heterooligomer composed of large and small subunits.

The protein localises to the cytoplasm. It carries out the reaction Exonucleolytic cleavage in either 5'- to 3'- or 3'- to 5'-direction to yield nucleoside 5'-phosphates.. Bidirectionally degrades single-stranded DNA into large acid-insoluble oligonucleotides, which are then degraded further into small acid-soluble oligonucleotides. This chain is Exodeoxyribonuclease 7 large subunit, found in Salmonella arizonae (strain ATCC BAA-731 / CDC346-86 / RSK2980).